The chain runs to 185 residues: Peptidyl-tRNA hydrolase (185 aa).

Residue Tyr-14 coordinates tRNA. Catalysis depends on His-19, which acts as the Proton acceptor. TRNA is bound by residues Phe-64, Asn-66, and Asn-112.

Belongs to the PTH family. In terms of assembly, monomer.

It is found in the cytoplasm. The enzyme catalyses an N-acyl-L-alpha-aminoacyl-tRNA + H2O = an N-acyl-L-amino acid + a tRNA + H(+). Its function is as follows. Hydrolyzes ribosome-free peptidyl-tRNAs (with 1 or more amino acids incorporated), which drop off the ribosome during protein synthesis, or as a result of ribosome stalling. Catalyzes the release of premature peptidyl moieties from peptidyl-tRNA molecules trapped in stalled 50S ribosomal subunits, and thus maintains levels of free tRNAs and 50S ribosomes. The protein is Peptidyl-tRNA hydrolase of Alkaliphilus metalliredigens (strain QYMF).